We begin with the raw amino-acid sequence, 464 residues long: AAC-rich mRNA clone AAC11 protein (464 aa).

Over residues 1 to 15 (MSTPTLPNLSQLHGI) the composition is skewed to polar residues. Disordered stretches follow at residues 1–112 (MSTP…HGTN) and 125–464 (SLPQ…SFFH). Composition is skewed to low complexity over residues 16–65 (QNQS…QQPQ), 78–88 (NPNGLGLMGHN), and 130–160 (INNN…NNSN). The segment covering 161-174 (LGINSSPTQSSANS) has biased composition (polar residues). DNA-binding regions (a.T hook) lie at residues 177 to 189 (KRSR…NPPS), 198 to 210 (KRKR…MDEE), and 224 to 236 (NKKR…PKDE). Positions 240-253 (DYNNTSFSDSNTDG) are enriched in polar residues. A DNA-binding region (a.T hook 4) is located at residues 255-267 (PKKRGRPPKAKGD). The span at 276-428 (NTLGNGILNS…NNAGNLGNLG (153 aa)) shows a compositional bias: low complexity. The span at 433 to 464 (LHSSDPNNPNAQKSFPDSTNTMDFQPNFSFFH) shows a compositional bias: polar residues.

This Dictyostelium discoideum (Social amoeba) protein is AAC-rich mRNA clone AAC11 protein (AAC11).